Here is a 594-residue protein sequence, read N- to C-terminus: UvrABC system protein C (594 aa).

Residues 17 to 94 (LEPGCYLMKD…IKQYQPRYNI (78 aa)) enclose the GIY-YIG domain. A UVR domain is found at 199–234 (KTILNHLEERMNKASEQLDFEQAKEYRDMIQHIHNL).

The protein belongs to the UvrC family. Interacts with UvrB in an incision complex.

The protein resides in the cytoplasm. The UvrABC repair system catalyzes the recognition and processing of DNA lesions. UvrC both incises the 5' and 3' sides of the lesion. The N-terminal half is responsible for the 3' incision and the C-terminal half is responsible for the 5' incision. In Staphylococcus epidermidis (strain ATCC 35984 / DSM 28319 / BCRC 17069 / CCUG 31568 / BM 3577 / RP62A), this protein is UvrABC system protein C.